We begin with the raw amino-acid sequence, 197 residues long: uncharacterized protein (197 aa).

A run of 4 helical transmembrane segments spans residues 12-41, 78-100, 120-142, and 162-184; these read LCIF…WVLF, LIQG…TALS, VGVF…FGCV, and IRFA…IFRS.

It is found in the cell membrane. This is an uncharacterized protein from Treponema pallidum (strain Nichols).